Consider the following 349-residue polypeptide: Hydroxymethylglutaryl-CoA synthase (349 aa).

(3S)-3-hydroxy-3-methylglutaryl-CoA contacts are provided by aspartate 30 and alanine 31. The active-site Proton donor/acceptor is the glutamate 82. The (3S)-3-hydroxy-3-methylglutaryl-CoA site is built by cysteine 114 and threonine 155. The Acyl-thioester intermediate role is filled by cysteine 114. Arginine 203 is a CoA binding site. The (3S)-3-hydroxy-3-methylglutaryl-CoA site is built by threonine 205 and histidine 238. Histidine 238 (proton donor/acceptor) is an active-site residue. Lysine 243 contributes to the CoA binding site. (3S)-3-hydroxy-3-methylglutaryl-CoA-binding residues include asparagine 270 and serine 300.

This sequence belongs to the thiolase-like superfamily. Archaeal HMG-CoA synthase family. In terms of assembly, interacts with acetoacetyl-CoA thiolase that catalyzes the precedent step in the pathway and with a DUF35 protein. The acetoacetyl-CoA thiolase/HMG-CoA synthase complex channels the intermediate via a fused CoA-binding site, which allows for efficient coupling of the endergonic thiolase reaction with the exergonic HMGCS reaction.

It catalyses the reaction acetoacetyl-CoA + acetyl-CoA + H2O = (3S)-3-hydroxy-3-methylglutaryl-CoA + CoA + H(+). It participates in metabolic intermediate biosynthesis; (R)-mevalonate biosynthesis; (R)-mevalonate from acetyl-CoA: step 2/3. Catalyzes the condensation of acetyl-CoA with acetoacetyl-CoA to form 3-hydroxy-3-methylglutaryl-CoA (HMG-CoA). Functions in the mevalonate (MVA) pathway leading to isopentenyl diphosphate (IPP), a key precursor for the biosynthesis of isoprenoid compounds that are building blocks of archaeal membrane lipids. This is Hydroxymethylglutaryl-CoA synthase from Methanococcus maripaludis (strain C7 / ATCC BAA-1331).